A 369-amino-acid polypeptide reads, in one-letter code: Methylthioribose-1-phosphate isomerase (369 aa).

An N-acetylmethionine modification is found at methionine 1. At arginine 158 the chain carries Omega-N-methylarginine. Residue aspartate 248 is the Proton donor of the active site. Phosphoserine is present on serine 366.

It belongs to the eIF-2B alpha/beta/delta subunits family. MtnA subfamily.

It is found in the cytoplasm. It localises to the nucleus. The catalysed reaction is 5-(methylsulfanyl)-alpha-D-ribose 1-phosphate = 5-(methylsulfanyl)-D-ribulose 1-phosphate. It functions in the pathway amino-acid biosynthesis; L-methionine biosynthesis via salvage pathway; L-methionine from S-methyl-5-thio-alpha-D-ribose 1-phosphate: step 1/6. In terms of biological role, catalyzes the interconversion of methylthioribose-1-phosphate (MTR-1-P) into methylthioribulose-1-phosphate (MTRu-1-P). The protein is Methylthioribose-1-phosphate isomerase (Mri1) of Mus musculus (Mouse).